Here is a 736-residue protein sequence, read N- to C-terminus: MEEGSKENCGFNGSPMGSRSPPKQLTSAASVLGEIQIAAANLKTPTKPQERNNADPWTPTANLKMLISAASPEIRNREREILEEQFSGDELEKTLPSRKEKSLGLLCHKFLARYPSYPNPAVNNSICLDEVAGELSVERRRIYDIVNVLESLHMVSRLAKNKYIWHGRLNLSKTFDALKKVGEENRYGEQIQLLRKREQEECDSQNSPNAETQKPLAKQPEVGFVELPGLEFRAASVNSRKEKSLRVMSQRFVMLFLVSDPQIVSLEVAAKILIGEDQLEDLDKSKFKTKIRRLYDIANVLTSLNLIKKVHVTEEKGRKPAFQWTCPELCTDDQENRSSPAALTPVAIDLSSPKENCAKNLFASGGKTFTRHPSLIKLAKSIENDRRKINSAPSSPIKSGDGSSSAASKMAQLAAICKQQLQQSRDQTKVKLKVSACKAKSTVKQPGGSDKNQTPTYCRAIPLLHPHPSAAPPYTVIVQPPQEQTLSRQSPPALGYTNRTPPEAPLQGGRHEGDGTSHSEDHSAQERHPKRLPESDRGCTSKRMKSSAVDDVTETLYPSGYLIPIHLAPVAPEPSKENTGPSSENKLFTSPIPGVFPLKLMFSPGPVTAVPVMSRGGQHVGGGSGSASRSPSPGMFTFALQNRELISAGLPQGATVSPRNGRGQEELSAASVLNCKHVSPVPYHGQPFTVFALQQSAVPVTPKGYHSLQETFFRTPGGMGCSPPESARKLDVGTDD.

The disordered stretch occupies residues 1–26; that stretch reads MEEGSKENCGFNGSPMGSRSPPKQLT. The span at 15-26 shows a compositional bias: polar residues; that stretch reads PMGSRSPPKQLT. DNA-binding regions lie at residues 98 to 167 and 240 to 326; these read RKEK…IWHG and RKEK…QWTC. Disordered regions lie at residues 386-405, 435-456, 483-551, and 716-736; these read RRKI…GSSS, SACK…QTPT, EQTL…AVDD, and PGGM…GTDD. Positions 393 to 405 are enriched in low complexity; it reads PSSPIKSGDGSSS. 2 stretches are compositionally biased toward basic and acidic residues: residues 509-539 and 726-736; these read GRHE…DRGC and SARKLDVGTDD.

The protein belongs to the E2F/DP family. In terms of assembly, homodimer and heterodimer: mainly forms homodimers and, to a lesser extent, heterodimers with e2f7.

The protein resides in the nucleus. Atypical E2F transcription factor that participates in various processes such as angiogenesis and polyploidization of specialized cells. Mainly acts as a transcription repressor that binds DNA independently of DP proteins and specifically recognizes the E2 recognition site 5'-TTTC[CG]CGC-3'. Directly represses transcription of classical E2F transcription factors such as e2f1. Acts as a regulator of S-phase by recognizing and binding the E2-related site 5'-TTCCCGCC-3' and mediating repression of G1/S-regulated genes. Acts as a promoter of sprouting angiogenesis, possibly by acting as a transcription activator. In Xenopus tropicalis (Western clawed frog), this protein is Transcription factor E2F8 (e2f8).